Consider the following 202-residue polypeptide: Na(+)-translocating NADH-quinone reductase subunit E (202 aa).

A run of 6 helical transmembrane segments spans residues 5-25 (VSLF…FLGM), 35-55 (VSTA…TVPL), 81-101 (FLGL…LEMF), 114-134 (GVFL…LFMV), 144-164 (LTYG…LAGI), and 180-200 (LGIT…FGGM).

This sequence belongs to the NqrDE/RnfAE family. As to quaternary structure, composed of six subunits; NqrA, NqrB, NqrC, NqrD, NqrE and NqrF.

It is found in the cell inner membrane. It carries out the reaction a ubiquinone + n Na(+)(in) + NADH + H(+) = a ubiquinol + n Na(+)(out) + NAD(+). NQR complex catalyzes the reduction of ubiquinone-1 to ubiquinol by two successive reactions, coupled with the transport of Na(+) ions from the cytoplasm to the periplasm. NqrA to NqrE are probably involved in the second step, the conversion of ubisemiquinone to ubiquinol. In Psychrobacter sp. (strain PRwf-1), this protein is Na(+)-translocating NADH-quinone reductase subunit E.